The following is a 299-amino-acid chain: Lipoyl synthase 2 (299 aa).

[4Fe-4S] cluster is bound by residues cysteine 43, cysteine 48, cysteine 54, cysteine 69, cysteine 73, cysteine 76, and serine 294. Positions 55-283 (YAAGTATFLL…GAVARDLGFA (229 aa)) constitute a Radical SAM core domain.

This sequence belongs to the radical SAM superfamily. Lipoyl synthase family. [4Fe-4S] cluster is required as a cofactor.

The protein resides in the cytoplasm. It catalyses the reaction [[Fe-S] cluster scaffold protein carrying a second [4Fe-4S](2+) cluster] + N(6)-octanoyl-L-lysyl-[protein] + 2 oxidized [2Fe-2S]-[ferredoxin] + 2 S-adenosyl-L-methionine + 4 H(+) = [[Fe-S] cluster scaffold protein] + N(6)-[(R)-dihydrolipoyl]-L-lysyl-[protein] + 4 Fe(3+) + 2 hydrogen sulfide + 2 5'-deoxyadenosine + 2 L-methionine + 2 reduced [2Fe-2S]-[ferredoxin]. It participates in protein modification; protein lipoylation via endogenous pathway; protein N(6)-(lipoyl)lysine from octanoyl-[acyl-carrier-protein]: step 2/2. Functionally, catalyzes the radical-mediated insertion of two sulfur atoms into the C-6 and C-8 positions of the octanoyl moiety bound to the lipoyl domains of lipoate-dependent enzymes, thereby converting the octanoylated domains into lipoylated derivatives. The protein is Lipoyl synthase 2 of Parasynechococcus marenigrum (strain WH8102).